A 302-amino-acid polypeptide reads, in one-letter code: Adipolin (302 aa).

The first 20 residues, 1–20 (MRRWAWAAVVVLLGPQLVLL), serve as a signal peptide directing secretion. 2 disordered regions span residues 28 to 68 (EAQR…GPEF) and 86 to 110 (ALRK…PPGA). Asn43 is a glycosylation site (N-linked (GlcNAc...) asparagine). Positions 86–100 (ALRKRCGSRDKKPRD) are enriched in basic and acidic residues. In terms of domain architecture, C1q spans 147–302 (LRLVGEAFHC…SSFSGLLLGT (156 aa)).

Belongs to the adipolin/erythroferrone family. Homomultimer; disulfide-linked. May interact with ERFE. Post-translationally, processed into Adipolin fC1QTNF12 and Adipolin gC1QTNF12 by FURIN. Insulin enhances endogenous C1QTNF12 cleavage. In terms of tissue distribution, predominantly expressed by adipose tissues.

It localises to the secreted. Insulin-sensitizing adipocyte-secreted protein (adipokine) that regulates glucose metabolism in liver and adipose tissue. Promotes glucose uptake in adipocytes and suppresses de novo glucose production in hepatocytes via the PI3K-Akt signaling pathway. Administration lead to reduction of blood glucose. Able to attenuate inflammation in fat tissue. The chain is Adipolin from Homo sapiens (Human).